Here is an 870-residue protein sequence, read N- to C-terminus: Dynamin-2 (870 aa).

The 267-residue stretch at 28-294 (HLDLPQIAVV…LTNHIRESLP (267 aa)) folds into the Dynamin-type G domain. Residues 38–45 (GGQSAGKS) form a G1 motif region. Ser-41, Gly-43, Lys-44, Ser-45, Ser-46, Arg-59, and Gly-60 together coordinate GDP. Residues 64–66 (VTR) form a G2 motif region. The interval 136–139 (DLPG) is G3 motif. Residues 205 to 208 (TKLD) are G4 motif. 3 residues coordinate GDP: Lys-206, Asp-208, and Asp-211. Tyr-231 is subject to Phosphotyrosine. Residues 235–238 (VNRS) are G5 motif. GDP is bound by residues Asn-236, Arg-237, and Gln-239. Lys-299 bears the N6-acetyllysine mark. A PH domain is found at 519–625 (LVIRRGWLTI…WKASFLRAGV (107 aa)). The residue at position 597 (Tyr-597) is a Phosphotyrosine. N6-acetyllysine is present on Lys-598. The 92-residue stretch at 653-744 (VETIRNLVDS…IIGDISTSTV (92 aa)) folds into the GED domain. The disordered stretch occupies residues 741 to 870 (TSTVSTPVPP…IRPAEPSLLD (130 aa)). Residue Thr-755 is modified to Phosphothreonine. Residues 756–767 (WLQNTSSHSPTP) show a composition bias toward polar residues. Phosphoserine; by CDK1 is present on Ser-764. Positions 826–846 (SAPPQIPSRPARIPPGIPPGV) are enriched in pro residues. Low complexity predominate over residues 847–864 (PSRRAPAAPSRPTIIRPA).

Belongs to the TRAFAC class dynamin-like GTPase superfamily. Dynamin/Fzo/YdjA family. As to quaternary structure, oligomerizes into a helical polymer that self-assembles around the vesicle membrane, when associated to the menbrane through lipid binding. Interacts with SHANK1 and SHANK2. Interacts with SNX9. Interacts (via C-terminal proline-rich domain (PRD)) with SNX18 (via SH3 domain); this interaction regulates ATG9A and ATG16L1 trafficking from recycling endosomes to sites of autophagosome formation. Interacts with SNX33 (via SH3 domain). Interacts with PSTPIP1 (via SH3 domain). Interacts with CTNND2. Interacts (via C-terminal proline-rich domain (PRD)) with BIN1 (via SH3 domain); this interaction allows the recruitment of DNM2 to the membrane tubules and inhibits self-assembly-stimulated GTPase activity on the membrane. Interacts with GABARAP, GABARAPL1 and GABARAPL2. Interacts with MAP1LC3B (the lipidate and non-lipidated LC3 form); this interaction mediates recycling endosome scission leading to autophagosome release. Interacts with ITSN1. Interacts with MYOF. May interact with PIK3C3. May be a component of a complex composed of RAB5A (in GDP-bound form), DYN2 and PIK3C3. Interacts with SDC4; this interaction is markedly enhanced at focal ahesion site upon induction of focal adhesions and stress-fiber formation. Interacts with ACTN1. Interacts with CTTN; this interaction stimulates the intrinsic GTPase activity of DNM2 and stabilizes the association of DNM2 and actin filaments; in addition this interaction is stimulated by ligand binding to the receptor, leading to the recruitment of the DNM2-CTTN complex to the sequestered receptor-ligand complex to its internalization. Interacts with NOSTRIN (via SH3 domain); this interaction allows the recruitment of NOS3 to dynamin-positive structures. Interacts (via C-terminal proline-rich domain (PRD)) with SH3BP4 (via SH3 domain); this interaction controls the GTPase activity and is prevented by EGFR-induced tyrosine phosphorylation of either DNM2 or SH3BP4. Interacts with MYO1E (via SH3 domain). Interacts with TUBG1; this interaction may participate in centrosome cohesion. In terms of processing, phosphorylation at Ser-848 by GSK3-alpha relieves the inhibition of BIN1 and promotes endocytosis. Phosphorylation at Ser-764 by CDK1 is greatly increased upon mitotic entry. It regulates cytokinesis downstream of calcineurin, and does not affect clathrin-mediated endocytosis. Dephosphorylated by calcineurin/PP2 during cytokinesis in a Ca(2+)- and calmodulin-dependent manner. Phosphorylated on tyrosine residues by EGFR. Phosphorylated on tyrosine residues after activation of SRC. In terms of tissue distribution, ubiquitously expressed. Brain expression is restricted to glial cells and fibroblasts. Highest levels in the testis.

The protein localises to the cytoplasm. It localises to the cytoskeleton. It is found in the cytoplasmic vesicle. The protein resides in the clathrin-coated vesicle. Its subcellular location is the cell projection. The protein localises to the uropodium. It localises to the endosome. It is found in the microtubule organizing center. The protein resides in the centrosome. Its subcellular location is the centriole. The protein localises to the recycling endosome. It localises to the phagocytic cup. It is found in the phagosome membrane. The protein resides in the podosome. Its subcellular location is the cell junction. The protein localises to the postsynaptic density. It localises to the synapse. It is found in the synaptosome. The protein resides in the midbody. Its subcellular location is the membrane. The protein localises to the clathrin-coated pit. It localises to the cell membrane. The enzyme catalyses GTP + H2O = GDP + phosphate + H(+). Catalyzes the hydrolysis of GTP and utilizes this energy to mediate vesicle scission at plasma membrane during endocytosis and filament remodeling at many actin structures during organization of the actin cytoskeleton. Plays an important role in vesicular trafficking processes, namely clathrin-mediated endocytosis (CME), exocytic and clathrin-coated vesicle from the trans-Golgi network, and PDGF stimulated macropinocytosis. During vesicular trafficking process, associates to the membrane, through lipid binding, and self-assembles into ring-like structure through oligomerization to form a helical polymer around the vesicle membrane and leading to vesicle scission. Plays a role in organization of the actin cytoskeleton by mediating arrangement of stress fibers and actin bundles in podocytes. During organization of the actin cytoskeleton, self-assembles into ring-like structure that directly bundles actin filaments to form typical membrane tubules decorated with dynamin spiral polymers. Self-assembly increases GTPase activity and the GTP hydrolysis causes the rapid depolymerization of dynamin spiral polymers, and results in dispersion of actin bundles. Remodels, through its interaction with CTTN, bundled actin filaments in a GTPase-dependent manner and plays a role in orchestrating the global actomyosin cytoskeleton. The interaction with CTTN stabilizes the interaction of DNM2 and actin filaments and stimulates the intrinsic GTPase activity that results in actin filament-barbed ends and increases the sensitivity of filaments in bundles to the actin depolymerizing factor, CFL1. Plays a role in the autophagy process, by participating in the formation of ATG9A vesicles destined for the autophagosomes through its interaction with SNX18, by mediating recycling endosome scission leading to autophagosome release through MAP1LC3B interaction and by regulating maturation of apoptotic cell corpse-containing phagosomes by recruiting PIK3C3 to the phagosome membrane. Also plays a role in cytokinesis. May participate in centrosome cohesion through its interaction with TUBG1. Plays a role in the regulation of neuron morphology, axon growth and formation of neuronal growth cones. Involved in membrane tubulation. In Rattus norvegicus (Rat), this protein is Dynamin-2.